A 161-amino-acid polypeptide reads, in one-letter code: Nucleotide-binding protein Dtpsy_2240 (161 aa).

This sequence belongs to the YajQ family.

Nucleotide-binding protein. This Acidovorax ebreus (strain TPSY) (Diaphorobacter sp. (strain TPSY)) protein is Nucleotide-binding protein Dtpsy_2240.